The primary structure comprises 339 residues: Anthranilate phosphoribosyltransferase (339 aa).

Residues Gly82, 85–86, 92–95, 110–118, and Ser122 each bind 5-phospho-alpha-D-ribose 1-diphosphate; these read GD, NIST, and KHGNRGISS. Residue Gly82 coordinates anthranilate. Ser94 contacts Mg(2+). Asn113 contacts anthranilate. Arg168 is a binding site for anthranilate. Residues Asp227 and Glu228 each coordinate Mg(2+).

It belongs to the anthranilate phosphoribosyltransferase family. As to quaternary structure, homodimer. Mg(2+) serves as cofactor.

It catalyses the reaction N-(5-phospho-beta-D-ribosyl)anthranilate + diphosphate = 5-phospho-alpha-D-ribose 1-diphosphate + anthranilate. It participates in amino-acid biosynthesis; L-tryptophan biosynthesis; L-tryptophan from chorismate: step 2/5. In terms of biological role, catalyzes the transfer of the phosphoribosyl group of 5-phosphorylribose-1-pyrophosphate (PRPP) to anthranilate to yield N-(5'-phosphoribosyl)-anthranilate (PRA). The sequence is that of Anthranilate phosphoribosyltransferase from Vesicomyosocius okutanii subsp. Calyptogena okutanii (strain HA).